Reading from the N-terminus, the 364-residue chain is MIRAFDAFSLPLLRLFDAEDAHRLAIQGLRLLPQVKPRPDDPKLAVRAFGLNFPNPVGIAAGFDKNAEAPDALMRLGFGFVEIGTVTPKPQAGNPRPRLFRLERDEAVINRMGFNNDGSEAVLRRLAARAQQGGILGVNVGANKDSSDRVADYVALIETFAPVASYFTVNVSSPNTPGLRNLQQAAALDDLLARVIEARERVRPSAGDTPVLLKIAPDLTLGELDDVVHIARSRKVDGMIVANTTLSRSPLLRERTRMNEQGGLSGRPLFRLSTRMVAETYVRAEGAFPLIGVGGIDSGGAALTKIRAGASLVQLYSALIYKGLGLVESIKTDLASTLLRTGRDSLAEIVGADAPTITAEEWPV.

Residues 61–65 (AGFDK) and Thr85 contribute to the FMN site. Lys65 is a binding site for substrate. Substrate is bound at residue 110 to 114 (NRMGF). FMN is bound by residues Asn139 and Asn170. Substrate is bound at residue Asn170. The active-site Nucleophile is the Ser173. Residue Asn175 coordinates substrate. Lys214 and Ala242 together coordinate FMN. 243–244 (NT) lines the substrate pocket. FMN is bound by residues Gly266, Gly295, and 316–317 (YS).

The protein belongs to the dihydroorotate dehydrogenase family. Type 2 subfamily. Monomer. It depends on FMN as a cofactor.

Its subcellular location is the cell membrane. It carries out the reaction (S)-dihydroorotate + a quinone = orotate + a quinol. The protein operates within pyrimidine metabolism; UMP biosynthesis via de novo pathway; orotate from (S)-dihydroorotate (quinone route): step 1/1. Its function is as follows. Catalyzes the conversion of dihydroorotate to orotate with quinone as electron acceptor. This is Dihydroorotate dehydrogenase (quinone) from Rhodopseudomonas palustris (strain BisB5).